A 519-amino-acid polypeptide reads, in one-letter code: Bifunctional purine biosynthesis protein PurH (519 aa).

The MGS-like domain maps to 1–145 (MQPIQRALIS…KNHASVTVVV (145 aa)).

This sequence belongs to the PurH family.

It catalyses the reaction (6R)-10-formyltetrahydrofolate + 5-amino-1-(5-phospho-beta-D-ribosyl)imidazole-4-carboxamide = 5-formamido-1-(5-phospho-D-ribosyl)imidazole-4-carboxamide + (6S)-5,6,7,8-tetrahydrofolate. The enzyme catalyses IMP + H2O = 5-formamido-1-(5-phospho-D-ribosyl)imidazole-4-carboxamide. The protein operates within purine metabolism; IMP biosynthesis via de novo pathway; 5-formamido-1-(5-phospho-D-ribosyl)imidazole-4-carboxamide from 5-amino-1-(5-phospho-D-ribosyl)imidazole-4-carboxamide (10-formyl THF route): step 1/1. Its pathway is purine metabolism; IMP biosynthesis via de novo pathway; IMP from 5-formamido-1-(5-phospho-D-ribosyl)imidazole-4-carboxamide: step 1/1. In Allochromatium vinosum (strain ATCC 17899 / DSM 180 / NBRC 103801 / NCIMB 10441 / D) (Chromatium vinosum), this protein is Bifunctional purine biosynthesis protein PurH.